The following is a 759-amino-acid chain: GTPase-activating protein rrc-1 (759 aa).

The 80-residue stretch at 164 to 243 (PAIAAAVVTK…PRDCVMLIDD (80 aa)) folds into the SH3 domain. Residues 280-473 (LELTDLYMRT…FFIENSESLF (194 aa)) enclose the Rho-GAP domain. Positions 591–624 (ARSMRPTSRPPPSPRTRRARFSNGSSNNVQKLNE) are disordered. Positions 612–622 (SNGSSNNVQKL) are enriched in polar residues.

Expressed in coelomocytes, excretory cells, uterine-seam cells and GLR cells.

Functionally, functions as a GTPase-activating protein (GAP) for ced-10/rac-1 and CDC42. The protein is GTPase-activating protein rrc-1 (rrc-1) of Caenorhabditis elegans.